Here is a 404-residue protein sequence, read N- to C-terminus: Deoxyguanosinetriphosphate triphosphohydrolase-like protein 1 (404 aa).

Positions 75–219 (RLTHSIEVAQ…AAIADDIAYN (145 aa)) constitute an HD domain.

It belongs to the dGTPase family. Type 2 subfamily.

The sequence is that of Deoxyguanosinetriphosphate triphosphohydrolase-like protein 1 from Mesorhizobium japonicum (strain LMG 29417 / CECT 9101 / MAFF 303099) (Mesorhizobium loti (strain MAFF 303099)).